Consider the following 350-residue polypeptide: Probable 2-dehydropantoate 2-reductase (350 aa).

NADP(+)-binding positions include Gly9 to Gly14 and Asn115. Position 115 (Asn115) interacts with substrate. Residue Lys213 is the Proton donor of the active site. Substrate is bound by residues Asn217, Asn221, and Ser295. Glu307 contacts NADP(+).

Belongs to the ketopantoate reductase family.

It carries out the reaction (R)-pantoate + NADP(+) = 2-dehydropantoate + NADPH + H(+). The protein operates within cofactor biosynthesis; (R)-pantothenate biosynthesis; (R)-pantoate from 3-methyl-2-oxobutanoate: step 2/2. Functionally, catalyzes the NADPH-dependent reduction of ketopantoate into pantoic acid. The chain is Probable 2-dehydropantoate 2-reductase from Schizosaccharomyces pombe (strain 972 / ATCC 24843) (Fission yeast).